A 544-amino-acid chain; its full sequence is CTP synthase (544 aa).

Residues 1-265 (MTQYIFITGG…DDLVVKHFGL (265 aa)) are amidoligase domain. Serine 13 provides a ligand contact to CTP. UTP is bound at residue serine 13. ATP contacts are provided by residues 14–19 (SLGKGI) and aspartate 71. Mg(2+) is bound by residues aspartate 71 and glutamate 139. Residues 146-148 (DIE), 186-191 (KTKPTQ), and lysine 222 each bind CTP. UTP is bound by residues 186–191 (KTKPTQ) and lysine 222. The region spanning 290 to 541 (TVAMVGKYVN…IAAALDYQTE (252 aa)) is the Glutamine amidotransferase type-1 domain. Position 351 (glycine 351) interacts with L-glutamine. Cysteine 378 serves as the catalytic Nucleophile; for glutamine hydrolysis. Residues 379-382 (LGLQ), glutamate 402, and arginine 469 contribute to the L-glutamine site. Residues histidine 514 and glutamate 516 contribute to the active site.

It belongs to the CTP synthase family. In terms of assembly, homotetramer.

The catalysed reaction is UTP + L-glutamine + ATP + H2O = CTP + L-glutamate + ADP + phosphate + 2 H(+). The enzyme catalyses L-glutamine + H2O = L-glutamate + NH4(+). It carries out the reaction UTP + NH4(+) + ATP = CTP + ADP + phosphate + 2 H(+). The protein operates within pyrimidine metabolism; CTP biosynthesis via de novo pathway; CTP from UDP: step 2/2. With respect to regulation, allosterically activated by GTP, when glutamine is the substrate; GTP has no effect on the reaction when ammonia is the substrate. The allosteric effector GTP functions by stabilizing the protein conformation that binds the tetrahedral intermediate(s) formed during glutamine hydrolysis. Inhibited by the product CTP, via allosteric rather than competitive inhibition. Catalyzes the ATP-dependent amination of UTP to CTP with either L-glutamine or ammonia as the source of nitrogen. Regulates intracellular CTP levels through interactions with the four ribonucleotide triphosphates. This is CTP synthase from Dichelobacter nodosus (strain VCS1703A).